The sequence spans 400 residues: Enoyl-[acyl-carrier-protein] reductase [NADH] 2 (400 aa).

Residues 48–53 (GASSGF), 75–76 (FE), 112–113 (DA), and 141–142 (LA) each bind NAD(+). Tyr-228 contributes to the substrate binding site. Tyr-238 acts as the Proton donor in catalysis. Residues Lys-247 and 276 to 278 (LVT) each bind NAD(+).

It belongs to the TER reductase family. In terms of assembly, monomer.

It carries out the reaction a 2,3-saturated acyl-[ACP] + NAD(+) = a (2E)-enoyl-[ACP] + NADH + H(+). It participates in lipid metabolism; fatty acid biosynthesis. In terms of biological role, involved in the final reduction of the elongation cycle of fatty acid synthesis (FAS II). Catalyzes the reduction of a carbon-carbon double bond in an enoyl moiety that is covalently linked to an acyl carrier protein (ACP). This chain is Enoyl-[acyl-carrier-protein] reductase [NADH] 2, found in Vibrio vulnificus (strain YJ016).